Reading from the N-terminus, the 206-residue chain is Probable GTP-binding protein EngB (206 aa).

An EngB-type G domain is found at 23–197 (QGIEVAFAGR…ERVLDKWFGY (175 aa)). Residues 31–38 (GRSNAGKS), 58–62 (GRTQL), 76–79 (DLPG), 143–146 (TKAD), and 176–178 (FSS) each bind GTP. Positions 38 and 60 each coordinate Mg(2+).

This sequence belongs to the TRAFAC class TrmE-Era-EngA-EngB-Septin-like GTPase superfamily. EngB GTPase family. The cofactor is Mg(2+).

In terms of biological role, necessary for normal cell division and for the maintenance of normal septation. The sequence is that of Probable GTP-binding protein EngB from Pseudoalteromonas atlantica (strain T6c / ATCC BAA-1087).